A 379-amino-acid chain; its full sequence is Protein-glutamate methylesterase/protein-glutamine glutaminase (379 aa).

The region spanning 4–121 (KVLVVDDSSF…AKNSDEAGSL (118 aa)) is the Response regulatory domain. Residue Asp-55 is modified to 4-aspartylphosphate. Positions 185–379 (SGKEYKLLAI…ASMVKEISRG (195 aa)) constitute a CheB-type methylesterase domain. Catalysis depends on residues Ser-197, His-224, and Asp-321.

The protein belongs to the CheB family. Post-translationally, phosphorylated by CheA. Phosphorylation of the N-terminal regulatory domain activates the methylesterase activity.

It localises to the cytoplasm. The catalysed reaction is [protein]-L-glutamate 5-O-methyl ester + H2O = L-glutamyl-[protein] + methanol + H(+). It catalyses the reaction L-glutaminyl-[protein] + H2O = L-glutamyl-[protein] + NH4(+). In terms of biological role, involved in chemotaxis. Part of a chemotaxis signal transduction system that modulates chemotaxis in response to various stimuli. Catalyzes the demethylation of specific methylglutamate residues introduced into the chemoreceptors (methyl-accepting chemotaxis proteins or MCP) by CheR. Also mediates the irreversible deamidation of specific glutamine residues to glutamic acid. This is Protein-glutamate methylesterase/protein-glutamine glutaminase from Colwellia psychrerythraea (strain 34H / ATCC BAA-681) (Vibrio psychroerythus).